A 352-amino-acid polypeptide reads, in one-letter code: Fructose-1,6-bisphosphatase class 1 (352 aa).

Residues glutamate 111, aspartate 133, isoleucine 135, and aspartate 136 each contribute to the Mg(2+) site. Residues 136–139 (DGSS), asparagine 228, tyrosine 256, and lysine 286 contribute to the substrate site. Residue glutamate 292 participates in Mg(2+) binding.

The protein belongs to the FBPase class 1 family. In terms of assembly, homotetramer. Mg(2+) serves as cofactor.

The protein resides in the cytoplasm. It catalyses the reaction beta-D-fructose 1,6-bisphosphate + H2O = beta-D-fructose 6-phosphate + phosphate. Its pathway is carbohydrate biosynthesis; Calvin cycle. The polypeptide is Fructose-1,6-bisphosphatase class 1 (Crocosphaera subtropica (strain ATCC 51142 / BH68) (Cyanothece sp. (strain ATCC 51142))).